A 294-amino-acid polypeptide reads, in one-letter code: Deubiquitinase OTUD6B (294 aa).

Met1 is subject to N-acetylmethionine. The region spanning 148–285 (LEIKQIPSDG…GEHYNSVTRL (138 aa)) is the OTU domain. Residues 153–159 (IPSDGHC) form a cys-loop region. Residue Asp156 is part of the active site. Cys159 acts as the Nucleophile in catalysis. Positions 220–230 (IVNTAAWGGQL) are variable-loop. The his-loop stretch occupies residues 268-278 (YMRHAYGLGEH). His278 is a catalytic residue.

In terms of assembly, interacts with the eukaryotic translation initiation factor 4F complex. In terms of tissue distribution, ubiquitously expressed. Expression is observed in several organ systems including the cardiovascular, digestive, central and peripheral nervous and musculoskeletal systems.

The catalysed reaction is Thiol-dependent hydrolysis of ester, thioester, amide, peptide and isopeptide bonds formed by the C-terminal Gly of ubiquitin (a 76-residue protein attached to proteins as an intracellular targeting signal).. Deubiquitinating enzyme that may play a role in the ubiquitin-dependent regulation of protein synthesis, downstream of mTORC1. May associate with the protein synthesis initiation complex and modify its ubiquitination to repress translation. May also repress DNA synthesis and modify different cellular targets thereby regulating cell growth and proliferation. May also play a role in proteasome assembly and function. The chain is Deubiquitinase OTUD6B from Mus musculus (Mouse).